Reading from the N-terminus, the 140-residue chain is Nucleoside diphosphate kinase (140 aa).

Residues Lys11, Phe59, Arg87, Thr93, Arg104, and Asn114 each coordinate ATP. The active-site Pros-phosphohistidine intermediate is the His117.

This sequence belongs to the NDK family. As to quaternary structure, homotetramer. Requires Mg(2+) as cofactor.

It is found in the cytoplasm. It carries out the reaction a 2'-deoxyribonucleoside 5'-diphosphate + ATP = a 2'-deoxyribonucleoside 5'-triphosphate + ADP. The enzyme catalyses a ribonucleoside 5'-diphosphate + ATP = a ribonucleoside 5'-triphosphate + ADP. Its function is as follows. Major role in the synthesis of nucleoside triphosphates other than ATP. The ATP gamma phosphate is transferred to the NDP beta phosphate via a ping-pong mechanism, using a phosphorylated active-site intermediate. This Persephonella marina (strain DSM 14350 / EX-H1) protein is Nucleoside diphosphate kinase.